The following is a 393-amino-acid chain: Elongation factor Tu (393 aa).

The region spanning Lys-10–Val-203 is the tr-type G domain. A G1 region spans residues Gly-19–Thr-26. Residue Gly-19–Thr-26 coordinates GTP. Residue Thr-26 participates in Mg(2+) binding. The G2 stretch occupies residues Gly-60–Ser-64. A G3 region spans residues Asp-81–Gly-84. GTP is bound by residues Asp-81–His-85 and Asn-136–Asp-139. The segment at Asn-136–Asp-139 is G4. Residues Ser-173 to Leu-175 form a G5 region.

This sequence belongs to the TRAFAC class translation factor GTPase superfamily. Classic translation factor GTPase family. EF-Tu/EF-1A subfamily. Monomer.

The protein localises to the cytoplasm. It catalyses the reaction GTP + H2O = GDP + phosphate + H(+). GTP hydrolase that promotes the GTP-dependent binding of aminoacyl-tRNA to the A-site of ribosomes during protein biosynthesis. In Chlorobium limicola (strain DSM 245 / NBRC 103803 / 6330), this protein is Elongation factor Tu.